Reading from the N-terminus, the 125-residue chain is Ribonuclease P protein component (125 aa).

The protein belongs to the RnpA family. Consists of a catalytic RNA component (M1 or rnpB) and a protein subunit.

It carries out the reaction Endonucleolytic cleavage of RNA, removing 5'-extranucleotides from tRNA precursor.. Functionally, RNaseP catalyzes the removal of the 5'-leader sequence from pre-tRNA to produce the mature 5'-terminus. It can also cleave other RNA substrates such as 4.5S RNA. The protein component plays an auxiliary but essential role in vivo by binding to the 5'-leader sequence and broadening the substrate specificity of the ribozyme. The polypeptide is Ribonuclease P protein component (Oleidesulfovibrio alaskensis (strain ATCC BAA-1058 / DSM 17464 / G20) (Desulfovibrio alaskensis)).